The primary structure comprises 61 residues: Small ribosomal subunit protein uS14 (61 aa).

The Zn(2+) site is built by Cys-24, Cys-27, Cys-40, and Cys-43.

The protein belongs to the universal ribosomal protein uS14 family. Zinc-binding uS14 subfamily. In terms of assembly, part of the 30S ribosomal subunit. Contacts proteins S3 and S10. Zn(2+) is required as a cofactor.

In terms of biological role, binds 16S rRNA, required for the assembly of 30S particles and may also be responsible for determining the conformation of the 16S rRNA at the A site. This chain is Small ribosomal subunit protein uS14, found in Borreliella afzelii (strain PKo) (Borrelia afzelii).